Reading from the N-terminus, the 503-residue chain is DEAD-box ATP-dependent RNA helicase CshA (503 aa).

The short motif at 2–30 (QNFKELGISDKTVETLEAMGFKEPTPIQK) is the Q motif element. A Helicase ATP-binding domain is found at 33–203 (IPYTLEGKDI…QQFMKSPQIV (171 aa)). 46–53 (AQTGTGKT) provides a ligand contact to ATP. The DEAD box signature appears at 150–153 (DEAD). The region spanning 214 to 375 (QIDEYYTIVK…LRPPHRKEVL (162 aa)) is the Helicase C-terminal domain. The interval 436–503 (EKPLARKNRQ…KGRTFADLQK (68 aa)) is disordered. Residues 466 to 480 (KRSKGNFNKKKGKKT) are compositionally biased toward basic residues. Residues 481-490 (DRRERQDKGR) are compositionally biased toward basic and acidic residues.

This sequence belongs to the DEAD box helicase family. CshA subfamily. In terms of assembly, oligomerizes, may be a member of the RNA degradosome.

The protein localises to the cytoplasm. It catalyses the reaction ATP + H2O = ADP + phosphate + H(+). Its function is as follows. DEAD-box RNA helicase possibly involved in RNA degradation. Unwinds dsRNA in both 5'- and 3'-directions, has RNA-dependent ATPase activity. The sequence is that of DEAD-box ATP-dependent RNA helicase CshA from Staphylococcus haemolyticus (strain JCSC1435).